Here is a 495-residue protein sequence, read N- to C-terminus: Glutamyl-tRNA(Gln) amidotransferase subunit A (495 aa).

Active-site charge relay system residues include lysine 79 and serine 159. Catalysis depends on serine 183, which acts as the Acyl-ester intermediate.

This sequence belongs to the amidase family. GatA subfamily. As to quaternary structure, heterotrimer of A, B and C subunits.

The enzyme catalyses L-glutamyl-tRNA(Gln) + L-glutamine + ATP + H2O = L-glutaminyl-tRNA(Gln) + L-glutamate + ADP + phosphate + H(+). In terms of biological role, allows the formation of correctly charged Gln-tRNA(Gln) through the transamidation of misacylated Glu-tRNA(Gln) in organisms which lack glutaminyl-tRNA synthetase. The reaction takes place in the presence of glutamine and ATP through an activated gamma-phospho-Glu-tRNA(Gln). In Gluconobacter oxydans (strain 621H) (Gluconobacter suboxydans), this protein is Glutamyl-tRNA(Gln) amidotransferase subunit A.